A 63-amino-acid chain; its full sequence is Insect toxin TbIT-1 (63 aa).

Residues Lys2 to Asx63 enclose the LCN-type CS-alpha/beta domain. Disulfide bonds link Cys12/Cys62, Cys16/Cys38, Cys24/Cys43, and Cys28/Cys45.

The protein belongs to the long (4 C-C) scorpion toxin superfamily. Sodium channel inhibitor family. Beta subfamily. As to expression, expressed by the venom gland.

The protein localises to the secreted. In terms of biological role, beta toxins bind voltage-independently at site-4 of sodium channels (Nav) and shift the voltage of activation toward more negative potentials thereby affecting sodium channel activation and promoting spontaneous and repetitive firing. This toxin is only active against insects. In Tityus bahiensis (Brazilian scorpion), this protein is Insect toxin TbIT-1.